The primary structure comprises 847 residues: Signal transducer and activator of transcription 6 (847 aa).

N-acetylserine is present on serine 2. An SH2 domain is found at 517–632 (WFDGVLDLTK…EAFRSHYKPE (116 aa)). A Phosphotyrosine; by JAK modification is found at tyrosine 641. An LXXLL motif motif is present at residues 802 to 806 (LTKLL). Residues 809 to 847 (GQGESGGGSLGAQPLLQPSHYGQSGISMSHMDLRANPSW) are disordered.

It belongs to the transcription factor STAT family. In terms of assembly, forms a homodimer or a heterodimer with a related family member. Interacts with NCOA1 via its C-terminal LXXLL motif. In terms of processing, tyrosine phosphorylated on Tyr-641 following stimulation by IL4/interleukin-4. Tyrosine phosphorylated following stimulation by IL3/interleukin-3. Dephosphorylation on tyrosine residues by PTPN2 negatively regulates the IL4/interleukin-4 mediated signaling. Mono-ADP-ribosylated by PARP14.

The protein resides in the cytoplasm. It is found in the nucleus. Its function is as follows. Carries out a dual function: signal transduction and activation of transcription. Involved in IL4/interleukin-4- and IL3/interleukin-3-mediated signaling. The chain is Signal transducer and activator of transcription 6 (STAT6) from Homo sapiens (Human).